The chain runs to 156 residues: Peptidyl-prolyl cis-trans isomerase H (156 aa).

The 155-residue stretch at 1-155 (TPAGRLKCEL…MAVRITQCGE (155 aa)) folds into the PPIase cyclophilin-type domain.

This sequence belongs to the cyclophilin-type PPIase family. PPIase H subfamily.

Its subcellular location is the nucleus. It catalyses the reaction [protein]-peptidylproline (omega=180) = [protein]-peptidylproline (omega=0). Its function is as follows. PPIases accelerate the folding of proteins. It catalyzes the cis-trans isomerization of proline imidic peptide bonds in oligopeptides. The polypeptide is Peptidyl-prolyl cis-trans isomerase H (CYP3) (Mycosarcoma maydis (Corn smut fungus)).